A 338-amino-acid polypeptide reads, in one-letter code: MSRLTLALDVMGGDIGPRITIPASIKALEKDPMLSLLLFGDSQQINPLLEQVPSALKERLRVCHCSRVVENNQGLSYALRHSKGTSMRLAIEAVQKGEAQGCVSAGNTAALMGLSKVLLQPLKGIDRPALISLLPTMDGGRTVMLDLGANIDCNANNLYQFALMGAIFAENQLDLVFPRIALLNIGIEEIKGYKSIREAADLLTGNSSLNYIGFIEGNLLLNGKADVIVSDGFVGNIALKTLEGAAKNVISLIKGKSRNHLLKPLFNWLIKLLFKDSYQRLQKINPDQYNGASLIGLTSIVVKSHGAANIEAFNNAIHDAALQARQQIPEKILAGLQK.

This sequence belongs to the PlsX family. Homodimer. Probably interacts with PlsY.

It localises to the cytoplasm. It catalyses the reaction a fatty acyl-[ACP] + phosphate = an acyl phosphate + holo-[ACP]. Its pathway is lipid metabolism; phospholipid metabolism. In terms of biological role, catalyzes the reversible formation of acyl-phosphate (acyl-PO(4)) from acyl-[acyl-carrier-protein] (acyl-ACP). This enzyme utilizes acyl-ACP as fatty acyl donor, but not acyl-CoA. The polypeptide is Phosphate acyltransferase (Mannheimia succiniciproducens (strain KCTC 0769BP / MBEL55E)).